The following is a 548-amino-acid chain: Chaperonin GroEL (548 aa).

ATP contacts are provided by residues threonine 30–proline 33, lysine 51, aspartate 87–threonine 91, glycine 415, asparagine 479–alanine 481, and aspartate 495.

It belongs to the chaperonin (HSP60) family. As to quaternary structure, forms a cylinder of 14 subunits composed of two heptameric rings stacked back-to-back. Interacts with the co-chaperonin GroES.

The protein resides in the cytoplasm. The catalysed reaction is ATP + H2O + a folded polypeptide = ADP + phosphate + an unfolded polypeptide.. Functionally, together with its co-chaperonin GroES, plays an essential role in assisting protein folding. The GroEL-GroES system forms a nano-cage that allows encapsulation of the non-native substrate proteins and provides a physical environment optimized to promote and accelerate protein folding. The sequence is that of Chaperonin GroEL from Klebsiella aerogenes (strain ATCC 13048 / DSM 30053 / CCUG 1429 / JCM 1235 / KCTC 2190 / NBRC 13534 / NCIMB 10102 / NCTC 10006 / CDC 819-56) (Enterobacter aerogenes).